Reading from the N-terminus, the 276-residue chain is Outer plastidial membrane protein porin (276 aa).

This sequence belongs to the eukaryotic mitochondrial porin (TC 1.B.8.1) family.

Its subcellular location is the plastid outer membrane. In terms of biological role, forms a channel through the cell membrane that allows diffusion of small hydrophilic molecules. The channel adopts an open conformation at low or zero membrane potential and a closed conformation at potentials above 30-40 mV. The open state has a weak anion selectivity whereas the closed state is cation-selective. The protein is Outer plastidial membrane protein porin (POR1) of Pisum sativum (Garden pea).